Here is a 338-residue protein sequence, read N- to C-terminus: tRNA-specific 2-thiouridylase MnmA (338 aa).

ATP is bound by residues 6 to 13 and methionine 32; that span reads AMSGGVDS. Residue cysteine 92 is the Nucleophile of the active site. A disulfide bridge links cysteine 92 with cysteine 186. Residue glycine 116 participates in ATP binding. The segment at 134 to 136 is interaction with tRNA; sequence KDQ. Cysteine 186 serves as the catalytic Cysteine persulfide intermediate. The segment at 288 to 289 is interaction with tRNA; that stretch reads RY.

This sequence belongs to the MnmA/TRMU family.

The protein resides in the cytoplasm. It catalyses the reaction S-sulfanyl-L-cysteinyl-[protein] + uridine(34) in tRNA + AH2 + ATP = 2-thiouridine(34) in tRNA + L-cysteinyl-[protein] + A + AMP + diphosphate + H(+). Catalyzes the 2-thiolation of uridine at the wobble position (U34) of tRNA, leading to the formation of s(2)U34. The polypeptide is tRNA-specific 2-thiouridylase MnmA (Campylobacter lari (strain RM2100 / D67 / ATCC BAA-1060)).